The sequence spans 260 residues: MVLIRVLANLLILQLSYAQRTSELVIGGDECNINEHRFLVALHDALSGRFLCGGTLIHPEWVLTAAHCNTHFIIIYLGAHNQSVEFDYEETRYPEKKYFFPCSKNYTKWDKDIMLIRLYSPVRNSKHIAPISLPSSPPSVGSVCRIMGWGAITSPNETFPDVPHCANINLFNYTVCRAAYPELPATSRTLCAGILEGGIDTCHGDSGGPLICNGQFQGIVQAGGKTCARPRKPAVYTNVFDHLDWIKSIIAGNTAVTCPP.

Residues 1–18 (MVLIRVLANLLILQLSYA) form the signal peptide. Residues 19-24 (QRTSEL) constitute a propeptide that is removed on maturation. In terms of domain architecture, Peptidase S1 spans 25–251 (VIGGDECNIN…HLDWIKSIIA (227 aa)). Intrachain disulfides connect Cys-31/Cys-165, Cys-52/Cys-68, Cys-102/Cys-258, Cys-144/Cys-212, Cys-176/Cys-191, and Cys-202/Cys-227. His-67 functions as the Charge relay system in the catalytic mechanism. N-linked (GlcNAc...) asparagine glycosylation is found at Asn-81 and Asn-105. Asp-112 functions as the Charge relay system in the catalytic mechanism. N-linked (GlcNAc...) asparagine glycans are attached at residues Asn-156 and Asn-172. Residue Ser-206 is the Charge relay system of the active site.

The protein belongs to the peptidase S1 family. Snake venom subfamily. As to quaternary structure, monomer. As to expression, expressed by the venom gland.

It localises to the secreted. Its function is as follows. Snake venom serine protease that may act in the hemostasis system of the prey. This is Snake venom serine protease serpentokallikrein-1 from Protobothrops mucrosquamatus (Taiwan habu).